Reading from the N-terminus, the 361-residue chain is 3-dehydroquinate synthase (361 aa).

Residues S72–K77, T130–T131, K142, and K151 each bind NAD(+). Residues E184, H247, and H264 each contribute to the Zn(2+) site.

It belongs to the sugar phosphate cyclases superfamily. Dehydroquinate synthase family. Requires Co(2+) as cofactor. Zn(2+) serves as cofactor. The cofactor is NAD(+).

The protein resides in the cytoplasm. The enzyme catalyses 7-phospho-2-dehydro-3-deoxy-D-arabino-heptonate = 3-dehydroquinate + phosphate. It functions in the pathway metabolic intermediate biosynthesis; chorismate biosynthesis; chorismate from D-erythrose 4-phosphate and phosphoenolpyruvate: step 2/7. Functionally, catalyzes the conversion of 3-deoxy-D-arabino-heptulosonate 7-phosphate (DAHP) to dehydroquinate (DHQ). This is 3-dehydroquinate synthase from Bacillus cereus (strain ATCC 10987 / NRS 248).